The chain runs to 173 residues: Cytochrome c-type biogenesis protein CcmE (173 aa).

At 1–8 the chain is on the cytoplasmic side; it reads MMSRKKRR. Residues 9–29 traverse the membrane as a helical; Signal-anchor for type II membrane protein segment; the sequence is LWIVIACGIGLSTAVALMLFA. At 30–173 the chain is on the periplasmic side; it reads FRSSLSFFMS…PAQIEASNNG (144 aa). Residues histidine 127 and tyrosine 131 each coordinate heme. Positions 145–173 are disordered; it reads KWNPKFGPPPNAGAWDDKSPAQIEASNNG.

Belongs to the CcmE/CycJ family.

The protein localises to the cell inner membrane. Its function is as follows. Heme chaperone required for the biogenesis of c-type cytochromes. Transiently binds heme delivered by CcmC and transfers the heme to apo-cytochromes in a process facilitated by CcmF and CcmH. This chain is Cytochrome c-type biogenesis protein CcmE, found in Acidiphilium cryptum (strain JF-5).